Here is a 132-residue protein sequence, read N- to C-terminus: Small ribosomal subunit protein uS8 (132 aa).

The protein belongs to the universal ribosomal protein uS8 family. Part of the 30S ribosomal subunit. Contacts proteins S5 and S12.

Functionally, one of the primary rRNA binding proteins, it binds directly to 16S rRNA central domain where it helps coordinate assembly of the platform of the 30S subunit. The chain is Small ribosomal subunit protein uS8 from Rhizobium etli (strain CIAT 652).